The sequence spans 93 residues: Phosphoribosyl-ATP pyrophosphatase (93 aa).

Belongs to the PRA-PH family.

It localises to the cytoplasm. The catalysed reaction is 1-(5-phospho-beta-D-ribosyl)-ATP + H2O = 1-(5-phospho-beta-D-ribosyl)-5'-AMP + diphosphate + H(+). The protein operates within amino-acid biosynthesis; L-histidine biosynthesis; L-histidine from 5-phospho-alpha-D-ribose 1-diphosphate: step 2/9. The chain is Phosphoribosyl-ATP pyrophosphatase from Mycobacterium sp. (strain JLS).